The sequence spans 85 residues: Probable Thioredoxin (85 aa).

The region spanning 2 to 85 (VVNIEVFTSP…LFEAINDEME (84 aa)) is the Glutaredoxin domain. Cys-13 and Cys-16 are oxidised to a cystine.

This sequence belongs to the glutaredoxin family.

The protein localises to the cytoplasm. Its function is as follows. Acts to maintain redox homeostasis; functions as a protein disulfide reductase. The sequence is that of Probable Thioredoxin from Methanothermobacter thermautotrophicus (strain ATCC 29096 / DSM 1053 / JCM 10044 / NBRC 100330 / Delta H) (Methanobacterium thermoautotrophicum).